Reading from the N-terminus, the 101-residue chain is NADH-quinone oxidoreductase subunit K (101 aa).

Transmembrane regions (helical) follow at residues 4–24 (LAHF…GIFL), 30–50 (IVLL…FVAF), and 61–81 (VFVF…LAIL).

It belongs to the complex I subunit 4L family. As to quaternary structure, NDH-1 is composed of 14 different subunits. Subunits NuoA, H, J, K, L, M, N constitute the membrane sector of the complex.

Its subcellular location is the cell inner membrane. It catalyses the reaction a quinone + NADH + 5 H(+)(in) = a quinol + NAD(+) + 4 H(+)(out). NDH-1 shuttles electrons from NADH, via FMN and iron-sulfur (Fe-S) centers, to quinones in the respiratory chain. The immediate electron acceptor for the enzyme in this species is believed to be ubiquinone. Couples the redox reaction to proton translocation (for every two electrons transferred, four hydrogen ions are translocated across the cytoplasmic membrane), and thus conserves the redox energy in a proton gradient. This Cupriavidus pinatubonensis (strain JMP 134 / LMG 1197) (Cupriavidus necator (strain JMP 134)) protein is NADH-quinone oxidoreductase subunit K.